We begin with the raw amino-acid sequence, 221 residues long: UPF0758 protein ECA0145 (221 aa).

Residues 99–221 (AMLNPEATGQ…FVSFAERGWI (123 aa)) form the MPN domain. His-170, His-172, and Asp-183 together coordinate Zn(2+). The JAMM motif signature appears at 170 to 183 (HNHPSGKAEPSQAD).

It belongs to the UPF0758 family. YicR subfamily.

This Pectobacterium atrosepticum (strain SCRI 1043 / ATCC BAA-672) (Erwinia carotovora subsp. atroseptica) protein is UPF0758 protein ECA0145.